We begin with the raw amino-acid sequence, 298 residues long: Acetylglutamate kinase (298 aa).

Substrate contacts are provided by residues 69-70 (GG), R91, and N196.

Belongs to the acetylglutamate kinase family. ArgB subfamily.

It is found in the cytoplasm. It catalyses the reaction N-acetyl-L-glutamate + ATP = N-acetyl-L-glutamyl 5-phosphate + ADP. Its pathway is amino-acid biosynthesis; L-arginine biosynthesis; N(2)-acetyl-L-ornithine from L-glutamate: step 2/4. Catalyzes the ATP-dependent phosphorylation of N-acetyl-L-glutamate. The protein is Acetylglutamate kinase of Bradyrhizobium sp. (strain BTAi1 / ATCC BAA-1182).